The following is a 103-amino-acid chain: Histone H4 (103 aa).

Residue lysine 6 is modified to N6-acetyl-N6-methyllysine; alternate. An N6-methyllysine; alternate mark is found at lysine 6, lysine 9, and lysine 13. Lysine 13 is subject to N6-acetyl-N6-methyllysine; alternate. The DNA-binding element occupies lysine 17 to lysine 21. Lysine 92 is modified (N6-glutaryllysine).

This sequence belongs to the histone H4 family. As to quaternary structure, the nucleosome is a histone octamer containing two molecules each of H2A, H2B, H3 and H4 assembled in one H3-H4 heterotetramer and two H2A-H2B heterodimers. The octamer wraps approximately 147 bp of DNA. In terms of processing, glutarylation at Lys-92 (H4K91glu) destabilizes nucleosomes by promoting dissociation of the H2A-H2B dimers from nucleosomes.

It is found in the nucleus. It localises to the chromosome. Its function is as follows. Core component of nucleosome. Nucleosomes wrap and compact DNA into chromatin, limiting DNA accessibility to the cellular machineries which require DNA as a template. Histones thereby play a central role in transcription regulation, DNA repair, DNA replication and chromosomal stability. DNA accessibility is regulated via a complex set of post-translational modifications of histones, also called histone code, and nucleosome remodeling. The sequence is that of Histone H4 (H4.1) from Mortierella alpina (Oleaginous fungus).